A 235-amino-acid chain; its full sequence is High mobility group protein 1.2 (235 aa).

Positions 1–34 (MNSGYSANIFPSSSSPTLYQSHQLQPNPSATMYQ) are enriched in polar residues. The interval 1-47 (MNSGYSANIFPSSSSPTLYQSHQLQPNPSATMYQATPRDMGKPPVRG) is disordered. 2 consecutive DNA-binding regions (HMG box) follow at residues 47 to 117 (GKTS…AAYG) and 135 to 203 (PKRA…RNYK).

This sequence belongs to the HMGB family.

It is found in the nucleus. The polypeptide is High mobility group protein 1.2 (hmg-1.2) (Caenorhabditis elegans).